The primary structure comprises 156 residues: Small ribosomal subunit protein uS7 (156 aa).

Belongs to the universal ribosomal protein uS7 family. As to quaternary structure, part of the 30S ribosomal subunit. Contacts proteins S9 and S11.

In terms of biological role, one of the primary rRNA binding proteins, it binds directly to 16S rRNA where it nucleates assembly of the head domain of the 30S subunit. Is located at the subunit interface close to the decoding center, probably blocks exit of the E-site tRNA. This is Small ribosomal subunit protein uS7 from Dechloromonas aromatica (strain RCB).